The sequence spans 98 residues: NADH-ubiquinone oxidoreductase chain 4L (98 aa).

The next 3 helical transmembrane spans lie at 1 to 21 (MIPT…GMLI), 29 to 49 (SLLC…LIAL), and 61 to 81 (IILL…LVSI).

This sequence belongs to the complex I subunit 4L family. In terms of assembly, core subunit of respiratory chain NADH dehydrogenase (Complex I) which is composed of 45 different subunits.

It localises to the mitochondrion inner membrane. The enzyme catalyses a ubiquinone + NADH + 5 H(+)(in) = a ubiquinol + NAD(+) + 4 H(+)(out). Core subunit of the mitochondrial membrane respiratory chain NADH dehydrogenase (Complex I) which catalyzes electron transfer from NADH through the respiratory chain, using ubiquinone as an electron acceptor. Part of the enzyme membrane arm which is embedded in the lipid bilayer and involved in proton translocation. In Macaca ochreata (Booted macaque), this protein is NADH-ubiquinone oxidoreductase chain 4L (MT-ND4L).